The sequence spans 356 residues: Ferredoxin--NADP reductase (356 aa).

8 residues coordinate FAD: Thr-25, Glu-44, Gln-52, Tyr-57, Val-97, Phe-132, Asp-298, and Ser-339.

This sequence belongs to the ferredoxin--NADP reductase type 2 family. As to quaternary structure, homodimer. Requires FAD as cofactor.

It catalyses the reaction 2 reduced [2Fe-2S]-[ferredoxin] + NADP(+) + H(+) = 2 oxidized [2Fe-2S]-[ferredoxin] + NADPH. This Chlorobaculum parvum (strain DSM 263 / NCIMB 8327) (Chlorobium vibrioforme subsp. thiosulfatophilum) protein is Ferredoxin--NADP reductase.